The sequence spans 927 residues: MAPAPGMAPYSDEPTGPFHRPEHNDESTGRMSHESESSVSTTSIVFDRIEERLAAKEGHFELDDHDPMKEADDDDNDLETGRFLGGRSSTQEEDFPAKNDGMNRGMRRTLIIVAGLLISAWVVGLFFYVSHKSYKPASQIEHDPQATVVQGTGKQVTLDQVMGSYWRAESHSISWIESPDGEDGLLLLKDGPGKDFLVVEDVRTQNSAGVNAAVDVASSRTLIKERHFDFGGQTHTPGRVWPSKDLKKVLIATNLEANWRHSFYASYWVFDVDMQIAEPLIPGEPNVRVQLAQWSPTSDAIAYVRDNNLFLRSLKHDKVVQITKDGGAEVFNGVPDWVYEEEVFSGNSATWWSEDGNYIAYLRTNETGVPEYPVQYFLSRPSGTEPAPGEESYPEVRQIKYPKAGAHNPVVNLKFYDVARDESFTVEISGRFADDDRLITEVVWAGGQVIVKETNRVSDVLRVVLVDVAARTGKAVRELDVKAIDGGWFEITHKTKYIPADPSKGREQDGYIDMVIHDDNDHLAYFTPLNNSEPIMLTSGHWEVVDAPSTVDLDNNIVYFVATKESSIQRHVYQVDLSGNNLKAVTDTGSEGYYDISFSAGTGYALLSYRGPNIPWQKVISTPANAHKYEHMVEENKELAKSAREYELPIKIYGTIKVDGVELNYVERRPPHFDKNKKYPVLFQQYSGPGSQSVNKRFTVDYQSYVAAGLGYVCVTVDGRGTGFIGRKNRVIIRGDLGKWEAHDQIAAAKIWASKSYVDEERLAIWGWSFGGFNTLKTLEQDGGRTFKYGMAVAPVTDWRFYDSIYTERYMLTPQTNGHGYDTSAINNVTALKQSVRFLMMHGVADDNVHMQNSLTLLDKLNMVGVENYDVHVFPDSDHGIYFHNANRIVYDKLTNWLINAFNGEWIKVANAKPQKKRSIQPILPIL.

2 disordered regions span residues 1–44 and 58–101; these read MAPA…TTSI and GHFE…KNDG. Residues 1–108 are Cytoplasmic-facing; it reads MAPAPGMAPY…NDGMNRGMRR (108 aa). 2 stretches are compositionally biased toward basic and acidic residues: residues 19 to 36 and 58 to 70; these read HRPE…HESE and GHFE…PMKE. The chain crosses the membrane as a helical; Signal-anchor for type II membrane protein span at residues 109–129; that stretch reads TLIIVAGLLISAWVVGLFFYV. Residues 130 to 927 are Vacuolar-facing; sequence SHKSYKPASQ…RSIQPILPIL (798 aa). 2 N-linked (GlcNAc...) asparagine glycosylation sites follow: asparagine 365 and asparagine 530. Serine 769 acts as the Charge relay system in catalysis. Residue asparagine 828 is glycosylated (N-linked (GlcNAc...) asparagine). Catalysis depends on charge relay system residues aspartate 846 and histidine 879.

Belongs to the peptidase S9B family.

It is found in the vacuole membrane. The catalysed reaction is Release of an N-terminal dipeptide, Xaa-Yaa-|-Zaa-, from a polypeptide, preferentially when Yaa is Pro, provided Zaa is neither Pro nor hydroxyproline.. Functionally, type IV dipeptidyl-peptidase which removes N-terminal dipeptides sequentially from polypeptides having unsubstituted N-termini provided that the penultimate residue is proline. This is Probable dipeptidyl-aminopeptidase B (DAPB) from Podospora anserina (strain S / ATCC MYA-4624 / DSM 980 / FGSC 10383) (Pleurage anserina).